The following is a 300-amino-acid chain: Protoheme IX farnesyltransferase (300 aa).

The next 9 membrane-spanning stretches (helical) occupy residues 24–44 (VTQLAVFCAVIGMFLATPGMV), 48–68 (VLLGGTIGIGLLAGSAFAINC), 94–114 (LQILAFSTVLGGLGAWTLYTF), 118–138 (LTMWLTIATFVGYAVIYTLLL), 146–166 (IVIGGASGAMPPALGWAAVTG), 172–192 (AWILVLIIFVWTPPHFWVLAL), 217–237 (LHILLYTVILFAVTMMPFISG), 239–259 (SGAVYLTSAVLLGALFLAYAW), and 278–298 (IVYLSLLFAALLVDHYARPVI).

Belongs to the UbiA prenyltransferase family. Protoheme IX farnesyltransferase subfamily.

The protein resides in the cell inner membrane. It carries out the reaction heme b + (2E,6E)-farnesyl diphosphate + H2O = Fe(II)-heme o + diphosphate. Its pathway is porphyrin-containing compound metabolism; heme O biosynthesis; heme O from protoheme: step 1/1. Its function is as follows. Converts heme B (protoheme IX) to heme O by substitution of the vinyl group on carbon 2 of heme B porphyrin ring with a hydroxyethyl farnesyl side group. The chain is Protoheme IX farnesyltransferase from Burkholderia pseudomallei (strain 1106a).